Consider the following 212-residue polypeptide: Eukaryotic translation initiation factor 4E-1 (212 aa).

Cys125 and Cys129 form a disulfide bridge.

The protein belongs to the eukaryotic initiation factor 4E family. In terms of assembly, EIF4F is a multi-subunit complex, the composition of which varies with external and internal environmental conditions. It is composed of at least EIF4A, EIF4E and EIF4G. EIF4E is also known to interact with other partners, including pgl-1. Interacts with ifet-1. In terms of tissue distribution, enriched in the germline from L3 larvae to adults; regions of the gonad undergoing spermatogenesis. Expressed in germ granules (P granules); when associated with pgl-1.

It localises to the cytoplasm. Recognizes and binds the 7-methylguanosine-containing mRNA cap during an early step in the initiation of protein synthesis and facilitates ribosome binding by inducing the unwinding of the mRNAs secondary structures. All 5 eIF4E proteins bind monomethyl cap structures. Only ife-1, ife-2 and ife-5 bind trimethyl cap structures which result from trans-splicing. Translation of trimethyl cap structure mRNAs may be regulated by intracellular redox state; disulfide bonds change the width and depth of the cap-binding cavity determining selectivity to mRNA caps. Required for progression through meiotic divisions during spermatogenesis and for the production of viable sperm. It is not required during oogenesis. The chain is Eukaryotic translation initiation factor 4E-1 (ife-1) from Caenorhabditis elegans.